The sequence spans 404 residues: uncharacterized protein (404 aa).

The next 11 membrane-spanning stretches (helical) occupy residues 9–29 (IYLI…PYLS), 36–56 (GFGE…FIGL), 76–96 (LVVK…LLFC), 103–123 (IMFY…QLSI), 135–155 (FIQV…LEFY), 162–182 (KRIL…YLIY), 199–219 (AFFY…SFFI), 236–256 (LGLY…ILAI), 288–308 (IVPI…LFFL), 319–339 (IIVF…VNYL), and 366–386 (LIFT…LGIL).

Belongs to the polysaccharide synthase family. HI_0867/HI_1700 subfamily.

The protein resides in the cell membrane. This is an uncharacterized protein from Haemophilus influenzae (strain ATCC 51907 / DSM 11121 / KW20 / Rd).